The following is a 295-amino-acid chain: Polyadenylate-binding protein 2-B (295 aa).

Positions 1–102 (MAAVSSVASL…EEPGELTGDQ (102 aa)) are disordered. 2 stretches are compositionally biased toward gly residues: residues 19-31 (LRGG…GGQD) and 71-81 (GRGGSGGGAGG). Over residues 83-96 (EELEDEELEEEEPG) the composition is skewed to acidic residues. The stretch at 106-140 (DPELEAIKARVREMEEEAEKLKELQNEVEKQMNMS) forms a coiled coil. Positions 145-295 (NAGPVIMSVE…ARATSWYTPY (151 aa)) are necessary for homooligomerization. The RRM domain occupies 162–239 (RSIYVGNVDY…RQIKVVPKRT (78 aa)).

Monomer and homooligomer. Binds RNA as a monomer and oligomerizes when bound to poly(A).

The protein localises to the nucleus. It is found in the cytoplasm. Functionally, involved in the 3'-end formation of mRNA precursors (pre-mRNA) by the addition of a poly(A) tail of 200-250 nt to the upstream cleavage product. Stimulates poly(A) polymerase (PAPOLA) conferring processivity on the poly(A) tail elongation reaction and also controls the poly(A) tail length. Increases the affinity of poly(A) polymerase for RNA. Binds to poly(A) and to poly(G) with high affinity. May protect the poly(A) tail from degradation. The sequence is that of Polyadenylate-binding protein 2-B (pabpn1-b) from Xenopus laevis (African clawed frog).